The chain runs to 296 residues: Lipoyl synthase (296 aa).

[4Fe-4S] cluster is bound by residues Cys-35, Cys-40, Cys-46, Cys-61, Cys-65, Cys-68, and Ser-274. Residues 47–263 (WSSKHVTVMI…KEAAYARGFL (217 aa)) form the Radical SAM core domain.

This sequence belongs to the radical SAM superfamily. Lipoyl synthase family. The cofactor is [4Fe-4S] cluster.

Its subcellular location is the cytoplasm. It carries out the reaction [[Fe-S] cluster scaffold protein carrying a second [4Fe-4S](2+) cluster] + N(6)-octanoyl-L-lysyl-[protein] + 2 oxidized [2Fe-2S]-[ferredoxin] + 2 S-adenosyl-L-methionine + 4 H(+) = [[Fe-S] cluster scaffold protein] + N(6)-[(R)-dihydrolipoyl]-L-lysyl-[protein] + 4 Fe(3+) + 2 hydrogen sulfide + 2 5'-deoxyadenosine + 2 L-methionine + 2 reduced [2Fe-2S]-[ferredoxin]. It functions in the pathway protein modification; protein lipoylation via endogenous pathway; protein N(6)-(lipoyl)lysine from octanoyl-[acyl-carrier-protein]: step 2/2. Functionally, catalyzes the radical-mediated insertion of two sulfur atoms into the C-6 and C-8 positions of the octanoyl moiety bound to the lipoyl domains of lipoate-dependent enzymes, thereby converting the octanoylated domains into lipoylated derivatives. The chain is Lipoyl synthase from Neorickettsia sennetsu (strain ATCC VR-367 / Miyayama) (Ehrlichia sennetsu).